Consider the following 399-residue polypeptide: Probable sugar efflux transporter (399 aa).

12 consecutive transmembrane segments (helical) span residues 15–35 (VVTL…PVGL), 50–70 (VGMM…PFML), 81–101 (LIGL…AWSF), 103–123 (VLVI…SITS), 136–156 (AQAL…GIPI), 168–188 (MTFL…VKLL), 209–229 (PALV…YTAY), 246–266 (FATV…ILFG), 273–293 (ASGL…LLLP), 301–321 (LMLL…GMQV), 333–353 (VAMS…ALVG), and 364–384 (SIGY…LMIF).

This sequence belongs to the major facilitator superfamily. SotB (TC 2.A.1.2) family.

Its subcellular location is the cell inner membrane. In terms of biological role, involved in the efflux of sugars. The physiological role may be the reduction of the intracellular concentration of toxic sugars or sugar metabolites. The sequence is that of Probable sugar efflux transporter from Klebsiella pneumoniae (strain 342).